A 155-amino-acid polypeptide reads, in one-letter code: 3-hydroxyacyl-[acyl-carrier-protein] dehydratase FabZ (155 aa).

Residue histidine 57 is part of the active site.

Belongs to the thioester dehydratase family. FabZ subfamily.

It is found in the cytoplasm. It catalyses the reaction a (3R)-hydroxyacyl-[ACP] = a (2E)-enoyl-[ACP] + H2O. Functionally, involved in unsaturated fatty acids biosynthesis. Catalyzes the dehydration of short chain beta-hydroxyacyl-ACPs and long chain saturated and unsaturated beta-hydroxyacyl-ACPs. This chain is 3-hydroxyacyl-[acyl-carrier-protein] dehydratase FabZ, found in Cereibacter sphaeroides (strain ATCC 17025 / ATH 2.4.3) (Rhodobacter sphaeroides).